The chain runs to 183 residues: Ribosome-recycling factor (183 aa).

It belongs to the RRF family.

It is found in the cytoplasm. Responsible for the release of ribosomes from messenger RNA at the termination of protein biosynthesis. May increase the efficiency of translation by recycling ribosomes from one round of translation to another. This Christiangramia forsetii (strain DSM 17595 / CGMCC 1.15422 / KT0803) (Gramella forsetii) protein is Ribosome-recycling factor.